The chain runs to 727 residues: DNA replication licensing factor MCM5 (727 aa).

One can recognise an MCM domain in the interval 325–531 (VYKNICTKIA…SQDKEIASHI (207 aa)). Residue 375 to 382 (GDPSTAKS) participates in ATP binding. The short motif at 507–510 (SRFD) is the Arginine finger element.

This sequence belongs to the MCM family. In terms of assembly, component of the minichromosome maintenance (MCM) complex, a heterotetramer composed of MCM2, MCM3, MCM4, MCM5, MCM6 and MCM7. Interacts with EGT1. Expressed in shoot apex and flower buds.

It is found in the nucleus. Its subcellular location is the cytoplasm. The enzyme catalyses ATP + H2O = ADP + phosphate + H(+). Functionally, probable component of the MCM2-7 complex (MCM complex) that may function as a DNA helicase and which is essential to undergo a single round of replication initiation and elongation per cell cycle in eukaryotic cells. This is DNA replication licensing factor MCM5 (MCM5) from Arabidopsis thaliana (Mouse-ear cress).